The primary structure comprises 118 residues: Co-chaperonin GroES (118 aa).

The protein belongs to the GroES chaperonin family. As to quaternary structure, heptamer of 7 subunits arranged in a ring. Interacts with the chaperonin GroEL.

Its subcellular location is the cytoplasm. Functionally, together with the chaperonin GroEL, plays an essential role in assisting protein folding. The GroEL-GroES system forms a nano-cage that allows encapsulation of the non-native substrate proteins and provides a physical environment optimized to promote and accelerate protein folding. GroES binds to the apical surface of the GroEL ring, thereby capping the opening of the GroEL channel. The polypeptide is Co-chaperonin GroES (Helicobacter pylori (strain G27)).